The chain runs to 117 residues: Immunoglobulin heavy variable 3-74 (117 aa).

The signal sequence occupies residues 1 to 19 (MEFGLSWVFLVAILKGVQC). The framework-1 stretch occupies residues 20-44 (EVQLVESGGGLVQPGGSLRLSCAAS). The Ig-like domain maps to 20–117 (EVQLVESGGG…EDTAVYYCAR (98 aa)). An intrachain disulfide couples cysteine 41 to cysteine 115. Residues 45 to 52 (GFTFSSYW) are complementarity-determining-1. The tract at residues 53–69 (MHWVRQAPGKGLVWVSR) is framework-2. The complementarity-determining-2 stretch occupies residues 70-77 (INSDGSST). The framework-3 stretch occupies residues 78-115 (SYADSVKGRFTISRDNAKNTLYLQMNSLRAEDTAVYYC). The segment at 116–117 (AR) is complementarity-determining-3.

Immunoglobulins are composed of two identical heavy chains and two identical light chains; disulfide-linked.

It is found in the secreted. It localises to the cell membrane. In terms of biological role, v region of the variable domain of immunoglobulin heavy chains that participates in the antigen recognition. Immunoglobulins, also known as antibodies, are membrane-bound or secreted glycoproteins produced by B lymphocytes. In the recognition phase of humoral immunity, the membrane-bound immunoglobulins serve as receptors which, upon binding of a specific antigen, trigger the clonal expansion and differentiation of B lymphocytes into immunoglobulins-secreting plasma cells. Secreted immunoglobulins mediate the effector phase of humoral immunity, which results in the elimination of bound antigens. The antigen binding site is formed by the variable domain of one heavy chain, together with that of its associated light chain. Thus, each immunoglobulin has two antigen binding sites with remarkable affinity for a particular antigen. The variable domains are assembled by a process called V-(D)-J rearrangement and can then be subjected to somatic hypermutations which, after exposure to antigen and selection, allow affinity maturation for a particular antigen. The polypeptide is Immunoglobulin heavy variable 3-74 (Homo sapiens (Human)).